Here is a 1390-residue protein sequence, read N- to C-terminus: DNA-directed RNA polymerase subunit beta (1390 aa).

This sequence belongs to the RNA polymerase beta chain family. As to quaternary structure, the RNAP catalytic core consists of 2 alpha, 1 beta, 1 beta' and 1 omega subunit. When a sigma factor is associated with the core the holoenzyme is formed, which can initiate transcription.

It catalyses the reaction RNA(n) + a ribonucleoside 5'-triphosphate = RNA(n+1) + diphosphate. In terms of biological role, DNA-dependent RNA polymerase catalyzes the transcription of DNA into RNA using the four ribonucleoside triphosphates as substrates. This is DNA-directed RNA polymerase subunit beta from Chromobacterium violaceum (strain ATCC 12472 / DSM 30191 / JCM 1249 / CCUG 213 / NBRC 12614 / NCIMB 9131 / NCTC 9757 / MK).